Consider the following 500-residue polypeptide: UDP-N-acetylmuramoyl-L-alanyl-D-glutamate--2,6-diaminopimelate ligase (500 aa).

Residues Leu-26, Ser-28, and 43 to 45 (HQV) each bind UDP-N-acetyl-alpha-D-muramoyl-L-alanyl-D-glutamate. 123 to 129 (GTNGKTT) provides a ligand contact to ATP. Residues Asn-164, 165–166 (TT), Ser-192, Gln-198, and Arg-200 each bind UDP-N-acetyl-alpha-D-muramoyl-L-alanyl-D-glutamate. At Lys-232 the chain carries N6-carboxylysine. Meso-2,6-diaminopimelate is bound by residues Arg-399, 423 to 426 (DNPR), Gly-474, and Glu-478. The Meso-diaminopimelate recognition motif signature appears at 423-426 (DNPR).

The protein belongs to the MurCDEF family. MurE subfamily. Mg(2+) serves as cofactor. Post-translationally, carboxylation is probably crucial for Mg(2+) binding and, consequently, for the gamma-phosphate positioning of ATP.

The protein localises to the cytoplasm. It catalyses the reaction UDP-N-acetyl-alpha-D-muramoyl-L-alanyl-D-glutamate + meso-2,6-diaminopimelate + ATP = UDP-N-acetyl-alpha-D-muramoyl-L-alanyl-gamma-D-glutamyl-meso-2,6-diaminopimelate + ADP + phosphate + H(+). The protein operates within cell wall biogenesis; peptidoglycan biosynthesis. Functionally, catalyzes the addition of meso-diaminopimelic acid to the nucleotide precursor UDP-N-acetylmuramoyl-L-alanyl-D-glutamate (UMAG) in the biosynthesis of bacterial cell-wall peptidoglycan. The protein is UDP-N-acetylmuramoyl-L-alanyl-D-glutamate--2,6-diaminopimelate ligase of Actinobacillus pleuropneumoniae serotype 5b (strain L20).